Consider the following 802-residue polypeptide: Osmosensitive cation channel TMEM63C (802 aa).

Over 1–35 the chain is Extracellular; it reads MSAFPDSMDQKFHNMTVNECFQSRSTVLQGQPFGG. A helical membrane pass occupies residues 36 to 60; it reads IPTVLVLNIILWVFVVLLYSFLRKA. Residues 61–124 lie on the Cytoplasmic side of the membrane; the sequence is AWDYGRLALL…RDRDLINKCG (64 aa). Residues serine 75 and serine 78 each carry the phosphoserine modification. The chain crosses the membrane as a helical span at residues 125 to 157; the sequence is DDARIYITFQYHLIIFVLILCIPSLGIILPVNY. Residues 158–180 lie on the Extracellular side of the membrane; sequence IGTVLDWNSHFGRTTIVNVSTES. The helical transmembrane segment at 181–205 threads the bilayer; it reads KFLWLHSLFAFLYFLINLAFMGHHC. Residues 206-401 are Cytoplasmic-facing; it reads LGFVPKKSLH…IIWKHLSIRR (196 aa). Residues 402 to 431 form a helical membrane-spanning segment; sequence FSWWTRFIAINTFLFFLFFFLTTPAIIINT. The Extracellular segment spans residues 432–446; sequence IDIYNVTRPIEKLQS. A helical transmembrane segment spans residues 447–476; the sequence is PIVTQFFPSVLLWAFTVTMPLLVYLSAFLE. Over 477–480 the chain is Cytoplasmic; it reads AHWT. Residues 481-517 traverse the membrane as a helical segment; the sequence is RSSQNLIIVHKCYIFLVFMVVILPSMGLTSLHVFLRW. The Extracellular portion of the chain corresponds to 518 to 540; it reads LFDIYYLEHATIRFQCVFLPDNG. The chain crosses the membrane as a helical span at residues 541 to 573; the sequence is AFFINYVITAALLGTGMELMRLGSLCTYCTRLF. Over 574 to 593 the chain is Cytoplasmic; that stretch reads LSKSEPERVHIRKNQATDFQ. The helical transmembrane segment at 594 to 612 threads the bilayer; sequence FGREYAWMLNVFSVVMAYS. Over 613-615 the chain is Extracellular; the sequence is ITC. The chain crosses the membrane as a helical span at residues 616–640; that stretch reads PIIVPFGLLYLCMKHITDRYNMYYS. Residues 641-647 lie on the Cytoplasmic side of the membrane; the sequence is YAPTKLN. The chain crosses the membrane as a helical span at residues 648-676; sequence AQIHMAAVYQAIFAPLLGLFWMLFFSILR. The Extracellular segment spans residues 677-681; the sequence is VGSLH. A helical transmembrane segment spans residues 682–702; that stretch reads SITLFSMSSLIISVVIAFSGV. Residues 703 to 802 lie on the Cytoplasmic side of the membrane; the sequence is FLGKLRIAQR…EGLEMEGQSH (100 aa). A disordered region spans residues 753–785; it reads TPASSPARHTYGTINSQPEEGEEESGLRGFARE.

The protein belongs to the CSC1 (TC 1.A.17) family. In terms of assembly, monomer.

The protein resides in the endoplasmic reticulum membrane. It is found in the cell membrane. It carries out the reaction Ca(2+)(in) = Ca(2+)(out). Its function is as follows. Acts as an osmosensitive cation channel preferentially activated upon hypotonic stress. In contrast to TMEM63B, does not show phospholipid scramblase activity. Enriched in mitochondria-ER contact sites where it may regulate the metabolite flux and organelles' morphologies in response to osmotic changes. In particular may regulate mitochondrial motility and function in motor neuron axons. Required for the functional integrity of the kidney glomerular filtration barrier. This is Osmosensitive cation channel TMEM63C from Mus musculus (Mouse).